Here is a 151-residue protein sequence, read N- to C-terminus: 3-hydroxyacyl-[acyl-carrier-protein] dehydratase FabZ (151 aa).

Histidine 57 is an active-site residue.

The protein belongs to the thioester dehydratase family. FabZ subfamily.

The protein resides in the cytoplasm. It carries out the reaction a (3R)-hydroxyacyl-[ACP] = a (2E)-enoyl-[ACP] + H2O. Functionally, involved in unsaturated fatty acids biosynthesis. Catalyzes the dehydration of short chain beta-hydroxyacyl-ACPs and long chain saturated and unsaturated beta-hydroxyacyl-ACPs. This chain is 3-hydroxyacyl-[acyl-carrier-protein] dehydratase FabZ, found in Synechococcus sp. (strain CC9605).